The following is a 445-amino-acid chain: UPF0210 protein SPJ_0248 (445 aa).

The protein belongs to the UPF0210 family. In terms of assembly, homodimer.

This is UPF0210 protein SPJ_0248 from Streptococcus pneumoniae (strain JJA).